Consider the following 549-residue polypeptide: Glucose-6-phosphate isomerase (549 aa).

Glu355 functions as the Proton donor in the catalytic mechanism. Catalysis depends on residues His387 and Lys515.

The protein belongs to the GPI family.

The protein localises to the cytoplasm. It catalyses the reaction alpha-D-glucose 6-phosphate = beta-D-fructose 6-phosphate. The protein operates within carbohydrate biosynthesis; gluconeogenesis. Its pathway is carbohydrate degradation; glycolysis; D-glyceraldehyde 3-phosphate and glycerone phosphate from D-glucose: step 2/4. Functionally, catalyzes the reversible isomerization of glucose-6-phosphate to fructose-6-phosphate. The polypeptide is Glucose-6-phosphate isomerase (Haemophilus influenzae (strain 86-028NP)).